The following is a 329-amino-acid chain: 4-hydroxythreonine-4-phosphate dehydrogenase (329 aa).

Residues histidine 136 and threonine 137 each contribute to the substrate site. A divalent metal cation-binding residues include histidine 166, histidine 211, and histidine 266. Substrate is bound by residues lysine 274, asparagine 283, and arginine 292.

It belongs to the PdxA family. Homodimer. Zn(2+) serves as cofactor. Mg(2+) is required as a cofactor. Requires Co(2+) as cofactor.

It localises to the cytoplasm. The catalysed reaction is 4-(phosphooxy)-L-threonine + NAD(+) = 3-amino-2-oxopropyl phosphate + CO2 + NADH. Its pathway is cofactor biosynthesis; pyridoxine 5'-phosphate biosynthesis; pyridoxine 5'-phosphate from D-erythrose 4-phosphate: step 4/5. Catalyzes the NAD(P)-dependent oxidation of 4-(phosphooxy)-L-threonine (HTP) into 2-amino-3-oxo-4-(phosphooxy)butyric acid which spontaneously decarboxylates to form 3-amino-2-oxopropyl phosphate (AHAP). This is 4-hydroxythreonine-4-phosphate dehydrogenase from Escherichia coli O7:K1 (strain IAI39 / ExPEC).